Here is a 219-residue protein sequence, read N- to C-terminus: ATP synthase F(0) complex subunit a (219 aa).

6 helical membrane-spanning segments follow: residues 4–24, 61–81, 90–110, 124–144, 172–192, and 194–214; these read PTYL…ILFP, WAAL…LGLL, QLSL…IIGM, EGTP…SLFI, FVLL…LFLL, and LLEI…LSLY.

The protein belongs to the ATPase A chain family. Component of the ATP synthase complex composed at least of ATP5F1A/subunit alpha, ATP5F1B/subunit beta, ATP5MC1/subunit c (homooctomer), MT-ATP6/subunit a, MT-ATP8/subunit 8, ATP5ME/subunit e, ATP5MF/subunit f, ATP5MG/subunit g, ATP5MK/subunit k, ATP5MJ/subunit j, ATP5F1C/subunit gamma, ATP5F1D/subunit delta, ATP5F1E/subunit epsilon, ATP5PF/subunit F6, ATP5PB/subunit b, ATP5PD/subunit d, ATP5PO/subunit OSCP. ATP synthase complex consists of a soluble F(1) head domain (subunits alpha(3) and beta(3)) - the catalytic core - and a membrane F(0) domain - the membrane proton channel (subunits c, a, 8, e, f, g, k and j). These two domains are linked by a central stalk (subunits gamma, delta, and epsilon) rotating inside the F1 region and a stationary peripheral stalk (subunits F6, b, d, and OSCP). Interacts with DNAJC30; interaction is direct.

It localises to the mitochondrion inner membrane. It catalyses the reaction H(+)(in) = H(+)(out). In terms of biological role, subunit a, of the mitochondrial membrane ATP synthase complex (F(1)F(0) ATP synthase or Complex V) that produces ATP from ADP in the presence of a proton gradient across the membrane which is generated by electron transport complexes of the respiratory chain. ATP synthase complex consist of a soluble F(1) head domain - the catalytic core - and a membrane F(1) domain - the membrane proton channel. These two domains are linked by a central stalk rotating inside the F(1) region and a stationary peripheral stalk. During catalysis, ATP synthesis in the catalytic domain of F(1) is coupled via a rotary mechanism of the central stalk subunits to proton translocation. With the subunit c (ATP5MC1), forms the proton-conducting channel in the F(0) domain, that contains two crucial half-channels (inlet and outlet) that facilitate proton movement from the mitochondrial intermembrane space (IMS) into the matrix. Protons are taken up via the inlet half-channel and released through the outlet half-channel, following a Grotthuss mechanism. The polypeptide is ATP synthase F(0) complex subunit a (Oncorhynchus masou (Cherry salmon)).